Reading from the N-terminus, the 354-residue chain is Maleylacetate reductase 1 (354 aa).

It belongs to the iron-containing alcohol dehydrogenase family. In terms of assembly, homodimer.

It carries out the reaction 3-oxoadipate + NAD(+) = maleylacetate + NADH + H(+). The enzyme catalyses 3-oxoadipate + NADP(+) = maleylacetate + NADPH + H(+). It participates in aromatic compound metabolism; 3-chlorocatechol degradation. This chain is Maleylacetate reductase 1 (tfdFI), found in Cupriavidus pinatubonensis (strain JMP 134 / LMG 1197) (Cupriavidus necator (strain JMP 134)).